The primary structure comprises 391 residues: Multidrug resistance protein MdtL (391 aa).

The next 12 membrane-spanning stretches (helical) occupy residues 4–24, 42–62, 69–89, 93–113, 131–151, 158–178, 203–222, 245–265, 269–289, 293–313, 331–351, and 356–376; these read FLICSFALVLLYPAGIDMYLV, IAFSVYLAGMAAAMLFAGKVA, PVAIPGAALFIIASVFCSLAE, LFLAGRFLQGLGAGCCYVVAF, LLNGITCIIPVLAPVLGHLIM, SLFWAMAMMGIAVLMLSLFIL, FFLSRVVITTLSVSVILTFV, ALTAGVSMTVSFSTPFALGIF, TLMITSQVLFLAAGITLAVSP, VSLFGITLICAGFSVGFGVAM, LGIAQVCGSSLWIWLAAVVGI, and MLIGILIACSIVSLLLIMFVA.

It belongs to the major facilitator superfamily. DHA1 family. MdtL (TC 2.A.1.2.22) subfamily.

It localises to the cell inner membrane. Its function is as follows. Confers resistance to chloramphenicol. In Escherichia coli (strain 55989 / EAEC), this protein is Multidrug resistance protein MdtL.